A 436-amino-acid polypeptide reads, in one-letter code: Trigger factor (436 aa).

Residues 161–246 (GMRVTMDFIG…LIKVEEQILP (86 aa)) form the PPIase FKBP-type domain.

The protein belongs to the FKBP-type PPIase family. Tig subfamily.

It is found in the cytoplasm. It carries out the reaction [protein]-peptidylproline (omega=180) = [protein]-peptidylproline (omega=0). Involved in protein export. Acts as a chaperone by maintaining the newly synthesized protein in an open conformation. Functions as a peptidyl-prolyl cis-trans isomerase. The polypeptide is Trigger factor (Aeromonas salmonicida (strain A449)).